Reading from the N-terminus, the 306-residue chain is Glutathione transport system permease protein GsiC (306 aa).

Topologically, residues 1–8 (MLNYVIKR) are cytoplasmic. Residues 9-29 (LLGLIPTLFIVSVLVFLFVHM) form a helical membrane-spanning segment. The Periplasmic portion of the chain corresponds to 30–102 (LPGDPARLIA…SRFMPTLWLT (73 aa)). Residues 95-292 (FMPTLWLTIT…LEFILINLVV (198 aa)) enclose the ABC transmembrane type-1 domain. The helical transmembrane segment at 103 to 123 (ITSMVWAVIFGMAAGIIAAVW) threads the bilayer. The Cytoplasmic portion of the chain corresponds to 124-134 (RNRWPDRLSMT). The helical transmembrane segment at 135-155 (IAVSGISFPAFALGMLLIQVF) threads the bilayer. Over 156-168 (SVELGWLPTVGAD) the chain is Periplasmic. The helical transmembrane segment at 169–189 (SWQHYILPSLTLGAAVAAVMA) threads the bilayer. Over 190–228 (RFTRASFVDVLSEDYMRTARAKGVSETWVVLKHGLRNAM) the chain is Cytoplasmic. Residues 229–249 (IPVVTMMGLQFGFLLGGSIVV) form a helical membrane-spanning segment. Residues 250-277 (EKVFNWPGLGRLLVDSVEMRDYPVIQAE) are Periplasmic-facing. Residues 278–298 (ILLFSLEFILINLVVDVLYAA) form a helical membrane-spanning segment. Topologically, residues 299-306 (INPAIRYK) are cytoplasmic.

Belongs to the binding-protein-dependent transport system permease family. The complex is composed of two ATP-binding proteins (GsiA), two transmembrane proteins (GsiC and GsiD) and a solute-binding protein (GsiB).

It is found in the cell inner membrane. Its function is as follows. Part of the ABC transporter complex GsiABCD involved in glutathione import. Probably responsible for the translocation of the substrate across the membrane. In Escherichia coli O1:K1 / APEC, this protein is Glutathione transport system permease protein GsiC.